Here is a 571-residue protein sequence, read N- to C-terminus: Proline--tRNA ligase 1 (571 aa).

The protein belongs to the class-II aminoacyl-tRNA synthetase family. ProS type 1 subfamily. Homodimer.

The protein resides in the cytoplasm. It carries out the reaction tRNA(Pro) + L-proline + ATP = L-prolyl-tRNA(Pro) + AMP + diphosphate. Catalyzes the attachment of proline to tRNA(Pro) in a two-step reaction: proline is first activated by ATP to form Pro-AMP and then transferred to the acceptor end of tRNA(Pro). As ProRS can inadvertently accommodate and process non-cognate amino acids such as alanine and cysteine, to avoid such errors it has two additional distinct editing activities against alanine. One activity is designated as 'pretransfer' editing and involves the tRNA(Pro)-independent hydrolysis of activated Ala-AMP. The other activity is designated 'posttransfer' editing and involves deacylation of mischarged Ala-tRNA(Pro). The misacylated Cys-tRNA(Pro) is not edited by ProRS. This is Proline--tRNA ligase 1 from Clostridioides difficile (strain 630) (Peptoclostridium difficile).